The following is a 347-amino-acid chain: Epimerase family protein SDR39U1 homolog, chloroplastic (347 aa).

A chloroplast-targeting transit peptide spans 1 to 37 (MELLCSPTSLSSSFALSSALLVPRSFSMPGTRRFMVL). Residues 54-57 (TGFI), 76-77 (TR), 115-119 (LAGLP), and Arg-136 each bind NADP(+).

In terms of assembly, can form homodimers. In terms of tissue distribution, expressed in leaves, stems and flower buds.

Its subcellular location is the plastid. The protein localises to the chloroplast inner membrane. The protein resides in the chloroplast. Its function is as follows. Putative NADP-dependent oxidoreductase that acts as a positive regulator of chloroplast division. May play a role at an early stage of the division process. In Arabidopsis thaliana (Mouse-ear cress), this protein is Epimerase family protein SDR39U1 homolog, chloroplastic.